We begin with the raw amino-acid sequence, 152 residues long: Large-conductance mechanosensitive channel (152 aa).

The next 3 membrane-spanning stretches (helical) occupy residues 26–46 (VLDLAVGVVIGAAFSAIVGSA), 50–70 (ILTPFIGLITGGVDFSNLFIT), and 92–112 (IGVFLNAVIQFLIIAFFIFWL).

The protein belongs to the MscL family. In terms of assembly, homopentamer.

It localises to the cell inner membrane. Functionally, channel that opens in response to stretch forces in the membrane lipid bilayer. May participate in the regulation of osmotic pressure changes within the cell. The chain is Large-conductance mechanosensitive channel from Gluconobacter oxydans (strain 621H) (Gluconobacter suboxydans).